Here is a 624-residue protein sequence, read N- to C-terminus: Actin-related protein 8 (624 aa).

Position 1 is an N-acetylmethionine (M1). Basic and acidic residues predominate over residues 1-25; that stretch reads MTQAEKGDTENGKEKGGEKEKEQRG. Positions 1 to 29 are disordered; it reads MTQAEKGDTENGKEKGGEKEKEQRGVKRP. Residues S55 and T56 each contribute to the ATP site. S132 bears the Phosphoserine mark. 283-286 is a binding site for ATP; the sequence is DVGD. The residue at position 412 (S412) is a Phosphoserine. The segment at 430 to 462 is disordered; the sequence is SKQEQSAKATADRKSASKPIGFEGDLRGQSSDL.

Belongs to the actin family. ARP8 subfamily. Component of the chromatin remodeling INO80 complex; specifically part of a complex module associated with the DBINO domain of INO80. Exists as monomers and dimers, but the dimer is most probably the biologically relevant form required for stable interactions with histones that exploits the twofold symmetry of the nucleosome core.

It localises to the nucleus. It is found in the chromosome. Plays an important role in the functional organization of mitotic chromosomes. Exhibits low basal ATPase activity, and unable to polymerize. Its function is as follows. Proposed core component of the chromatin remodeling INO80 complex which is involved in transcriptional regulation, DNA replication and probably DNA repair. Required for the recruitment of INO80 (and probably the INO80 complex) to sites of DNA damage Strongly prefer nucleosomes and H3-H4 tetramers over H2A-H2B dimers, suggesting it may act as a nucleosome recognition module within the complex. The protein is Actin-related protein 8 (ACTR8) of Pongo abelii (Sumatran orangutan).